The following is a 303-amino-acid chain: Ribosomal protein L11 methyltransferase (303 aa).

S-adenosyl-L-methionine-binding residues include T144, G165, D187, and N235.

The protein belongs to the methyltransferase superfamily. PrmA family.

It is found in the cytoplasm. It carries out the reaction L-lysyl-[protein] + 3 S-adenosyl-L-methionine = N(6),N(6),N(6)-trimethyl-L-lysyl-[protein] + 3 S-adenosyl-L-homocysteine + 3 H(+). Methylates ribosomal protein L11. The chain is Ribosomal protein L11 methyltransferase from Prochlorococcus marinus (strain MIT 9312).